We begin with the raw amino-acid sequence, 517 residues long: GMP synthase [glutamine-hydrolyzing] (517 aa).

The Glutamine amidotransferase type-1 domain maps to 11–202 (KIIVLDFGSQ…AFNVCDAKAN (192 aa)). The Nucleophile role is filled by Cys-88. Catalysis depends on residues His-176 and Glu-178. Residues 203–392 (WTMDDFIEMQ…LGIPHDLVWR (190 aa)) enclose the GMPS ATP-PPase domain. An ATP-binding site is contributed by 230–236 (SGGVDSS).

As to quaternary structure, homodimer.

The catalysed reaction is XMP + L-glutamine + ATP + H2O = GMP + L-glutamate + AMP + diphosphate + 2 H(+). It functions in the pathway purine metabolism; GMP biosynthesis; GMP from XMP (L-Gln route): step 1/1. In terms of biological role, catalyzes the synthesis of GMP from XMP. In Lactobacillus gasseri (strain ATCC 33323 / DSM 20243 / BCRC 14619 / CIP 102991 / JCM 1131 / KCTC 3163 / NCIMB 11718 / NCTC 13722 / AM63), this protein is GMP synthase [glutamine-hydrolyzing].